We begin with the raw amino-acid sequence, 234 residues long: Large ribosomal subunit protein uL1 (234 aa).

This sequence belongs to the universal ribosomal protein uL1 family. As to quaternary structure, part of the 50S ribosomal subunit.

Binds directly to 23S rRNA. The L1 stalk is quite mobile in the ribosome, and is involved in E site tRNA release. Functionally, protein L1 is also a translational repressor protein, it controls the translation of the L11 operon by binding to its mRNA. The sequence is that of Large ribosomal subunit protein uL1 from Aliivibrio fischeri (strain MJ11) (Vibrio fischeri).